Here is a 354-residue protein sequence, read N- to C-terminus: MMITRGGAKAAKSLLVAAGPRLFSTVRTVSSHEALSASHILKPGVTSAWIWTRAPTIGGMRFASTITLGEKTPMKEEDANQKKTENESTGGDAAGGNNKGDKGIASYWGVEPNKITKEDGSEWKWNCFRPWETYKADITIDLKKHHVPTTFLDRIAYWTVKSLRWPTDLFFQRRYGCRAMMLETVAAVPGMVGGMLLHCKSLRRFEQSGGWIKALLEEAENERMHLMTFMEVAKPKWYERALVITVQGVFFNAYFLGYLISPKFAHRMVGYLEEEAIHSYTEFLKELDKGNIENVPAPAIAIDYWRLPADATLRDVVMVVRADEAHHRDVNHFASDIHYQGRELKEAPAPIGYH.

The transit peptide at 1–62 directs the protein to the mitochondrion; sequence MMITRGGAKA…RAPTIGGMRF (62 aa). A disordered region spans residues 68 to 99; the sequence is LGEKTPMKEEDANQKKTENESTGGDAAGGNNK. Over residues 72–86 the composition is skewed to basic and acidic residues; the sequence is TPMKEEDANQKKTEN. The chain crosses the membrane as a helical span at residues 179 to 199; sequence AMMLETVAAVPGMVGGMLLHC. Fe cation is bound by residues Glu183, Glu222, and His225. The chain crosses the membrane as a helical span at residues 241 to 261; it reads ALVITVQGVFFNAYFLGYLIS. Residues Glu273, Glu324, and His327 each coordinate Fe cation.

This sequence belongs to the alternative oxidase family. In terms of assembly, homodimer; disulfide-linked. Requires Fe cation as cofactor. In terms of tissue distribution, expressed in roots, stems, cotyledons, leaves and flowers. High expression in sepals.

The protein resides in the mitochondrion inner membrane. It catalyses the reaction 2 a ubiquinol + O2 = 2 a ubiquinone + 2 H2O. When the two monomeric subunits are covalently linked by a S-S bond, the enzyme is essentially inactive. When the disulfide bond is reduced, its component sulfhydryls can associate with K-keto acids through formation of a thiohemiacetal, resulting in enzyme activation. Activated by glyoxylate, irrespective to the substitution found at Cys-127. That suggests the presence of a second activation site, possibly Cys-177. Its function is as follows. Catalyzes the cyanide-resistant oxidation of ubiquinol and the reduction of molecular oxygen to water, but does not translocate protons and consequently is not linked to oxidative phosphorylation. Increases respiration when the cytochrome respiratory pathway is restricted, or in response to low temperatures. The polypeptide is Ubiquinol oxidase 1a, mitochondrial (AOX1A) (Arabidopsis thaliana (Mouse-ear cress)).